A 188-amino-acid polypeptide reads, in one-letter code: Probable nicotinate-nucleotide adenylyltransferase (188 aa).

Belongs to the NadD family.

The enzyme catalyses nicotinate beta-D-ribonucleotide + ATP + H(+) = deamido-NAD(+) + diphosphate. The protein operates within cofactor biosynthesis; NAD(+) biosynthesis; deamido-NAD(+) from nicotinate D-ribonucleotide: step 1/1. Catalyzes the reversible adenylation of nicotinate mononucleotide (NaMN) to nicotinic acid adenine dinucleotide (NaAD). This Sulfurovum sp. (strain NBC37-1) protein is Probable nicotinate-nucleotide adenylyltransferase.